The sequence spans 373 residues: Peroxisomal biogenesis factor 3 (373 aa).

Residues 1–15 (MLRSVWNFLKRHKKK) lie on the Cytoplasmic side of the membrane. Positions 1–45 (MLRSVWNFLKRHKKKCIFLGTVLGGVYILGKYGQKKIREIQEREA) are targeting to peroxisomes. The helical transmembrane segment at 16-36 (CIFLGTVLGGVYILGKYGQKK) threads the bilayer. Residues 37–116 (IREIQEREAA…LKIISFTRST (80 aa)) lie on the Peroxisomal side of the membrane. A helical membrane pass occupies residues 117–140 (VAVYSTCMLVVLLRVQLNIIGGYI). Residues 120–136 (YSTCMLVVLLRVQLNII) form an interaction with PEX19 region. Residues 141–373 (YLDNAAVGKN…AFSTPQQLEK (233 aa)) lie on the Cytoplasmic side of the membrane.

It belongs to the peroxin-3 family. Interacts with PEX19. In terms of tissue distribution, found in all examined tissues.

It is found in the peroxisome membrane. In terms of biological role, involved in peroxisome biosynthesis and integrity. Assembles membrane vesicles before the matrix proteins are translocated. As a docking factor for PEX19, is necessary for the import of peroxisomal membrane proteins in the peroxisomes. The chain is Peroxisomal biogenesis factor 3 (PEX3) from Homo sapiens (Human).